Consider the following 198-residue polypeptide: Ribosome maturation factor RimP (198 aa).

It belongs to the RimP family.

The protein localises to the cytoplasm. Required for maturation of 30S ribosomal subunits. This is Ribosome maturation factor RimP from Rhizobium etli (strain CIAT 652).